The sequence spans 303 residues: Beta-carotene 3-hydroxylase 2, chloroplastic (303 aa).

The N-terminal 52 residues, 1–52 (MAAGLSTIAVTLKPLNRSSFSANHPISTAVFPPSLRFNGFRRRKILTVCFVV), are a transit peptide targeting the chloroplast. Helical transmembrane passes span 96 to 116 (YLIA…MAVY) and 130 to 150 (VLEM…MEFW). The region spanning 143 to 270 (AAVGMEFWAR…KFKGVPYGLF (128 aa)) is the Fatty acid hydroxylase domain. Positions 155–160 (HRALWH) match the Histidine box-1 motif. Positions 165 to 171 (NMHESHH) match the Histidine box-2 motif. A run of 2 helical transmembrane segments spans residues 180–200 (LNDV…YYGF) and 206–226 (VPGL…AYMF). The short motif at 228 to 233 (HDGLVH) is the Histidine box-3 element. Residues 254-258 (HQLHH) carry the Histidine box-4 motif.

It belongs to the sterol desaturase family. In terms of assembly, homodimer. Expressed in leaves, flowers, stems, roots and siliques.

It is found in the plastid. Its subcellular location is the chloroplast membrane. The catalysed reaction is all-trans-beta-carotene + 4 reduced [2Fe-2S]-[ferredoxin] + 2 O2 + 4 H(+) = all-trans-zeaxanthin + 4 oxidized [2Fe-2S]-[ferredoxin] + 2 H2O. Its function is as follows. Nonheme diiron monooxygenase involved in the biosynthesis of xanthophylls. Specific for beta-ring hydroxylations of beta-carotene. Also has a low activity toward the beta- and epsilon-rings of alpha-carotene. No activity with acyclic carotenoids such as lycopene and neurosporene. Uses ferredoxin as an electron donor. This chain is Beta-carotene 3-hydroxylase 2, chloroplastic (BETA-OHASE 2), found in Arabidopsis thaliana (Mouse-ear cress).